A 375-amino-acid chain; its full sequence is RNA exonuclease 4 (375 aa).

The disordered stretch occupies residues 21–78; the sequence is KTLGSDASSSSASSSTNNRRKLSTSESTKPKRTRLDAKEKDAEGSKSCSPAPTSLPWF. Low complexity predominate over residues 25 to 35; it reads SDASSSSASSS. Positions 53–64 are enriched in basic and acidic residues; sequence TRLDAKEKDAEG. An Exonuclease domain is found at 134 to 297; sequence NYLAIDCEMV…FRSQKPKWDE (164 aa).

The protein belongs to the REXO4 family.

Its subcellular location is the nucleus. Exoribonuclease involved in ribosome biosynthesis. Involved in the processing of ITS1, the internal transcribed spacer localized between the 18S and 5.8S rRNAs. This Mycosarcoma maydis (Corn smut fungus) protein is RNA exonuclease 4 (REX4).